The primary structure comprises 65 residues: U15-hexatoxin-Mg1a (65 aa).

In terms of processing, contains 4 disulfide bonds. As to expression, expressed by the venom gland.

The protein localises to the secreted. Intrathorax injection into crickets causes paralysis prolonged for more than 60 minutes, followed by recovery. The polypeptide is U15-hexatoxin-Mg1a (Macrothele gigas (Japanese funnel web spider)).